The following is a 340-amino-acid chain: MAVTVYYDKDCDLSLIRSKKVAMIGFGSQGHAHALNLRDSGVDVVVGLKKGGKSWAKAEAMNFKVKSVVEATKEADVIMILTPDELQADIFASEIKDNLKEGDTIAFGHGFNIHYGQIVPPKGVDCIMVAPKAPGHTVRSEFVKGGGVPNLIAVSQNASGQAKELALSYASAIGAGRTGIIETTFKDETETDLFGEQAVLCGGLCALINAGFNTLTEAGYEPEMAYFECLHEMKLIVDLIYQGGMSDMRYSISNTAEYGDYISGKKVINEDSKKAMKEILGSIQDGSFAKDFILERKAGYARMNAERKIADASLLNKTGEKLRAMMPWIKNGKLVDKDKN.

The region spanning 1 to 183 is the KARI N-terminal Rossmann domain; that stretch reads MAVTVYYDKD…GAGRTGIIET (183 aa). NADP(+) contacts are provided by residues 26–29, Lys-49, Ser-54, and 84–87; these read FGSQ and DELQ. His-109 is a catalytic residue. Gly-135 contacts NADP(+). Positions 184-329 constitute a KARI C-terminal knotted domain; the sequence is TFKDETETDL…EKLRAMMPWI (146 aa). The Mg(2+) site is built by Asp-192, Glu-196, Glu-228, and Glu-232. Residue Ser-253 participates in substrate binding.

The protein belongs to the ketol-acid reductoisomerase family. The cofactor is Mg(2+).

It carries out the reaction (2R)-2,3-dihydroxy-3-methylbutanoate + NADP(+) = (2S)-2-acetolactate + NADPH + H(+). It catalyses the reaction (2R,3R)-2,3-dihydroxy-3-methylpentanoate + NADP(+) = (S)-2-ethyl-2-hydroxy-3-oxobutanoate + NADPH + H(+). It functions in the pathway amino-acid biosynthesis; L-isoleucine biosynthesis; L-isoleucine from 2-oxobutanoate: step 2/4. It participates in amino-acid biosynthesis; L-valine biosynthesis; L-valine from pyruvate: step 2/4. In terms of biological role, involved in the biosynthesis of branched-chain amino acids (BCAA). Catalyzes an alkyl-migration followed by a ketol-acid reduction of (S)-2-acetolactate (S2AL) to yield (R)-2,3-dihydroxy-isovalerate. In the isomerase reaction, S2AL is rearranged via a Mg-dependent methyl migration to produce 3-hydroxy-3-methyl-2-ketobutyrate (HMKB). In the reductase reaction, this 2-ketoacid undergoes a metal-dependent reduction by NADPH to yield (R)-2,3-dihydroxy-isovalerate. The sequence is that of Ketol-acid reductoisomerase (NADP(+)) from Campylobacter hominis (strain ATCC BAA-381 / DSM 21671 / CCUG 45161 / LMG 19568 / NCTC 13146 / CH001A).